The following is a 97-amino-acid chain: MKIRPLHDRVIVKRKEVESKSAGGIVLTGSAAGKSTRGEVLAVGNGRILESGDVKPLDVKVGDVVIFSEGYGAKTEKIDNQEVLIISESDILAIVEA.

This sequence belongs to the GroES chaperonin family. As to quaternary structure, heptamer of 7 subunits arranged in a ring. Interacts with the chaperonin GroEL.

The protein resides in the cytoplasm. In terms of biological role, together with the chaperonin GroEL, plays an essential role in assisting protein folding. The GroEL-GroES system forms a nano-cage that allows encapsulation of the non-native substrate proteins and provides a physical environment optimized to promote and accelerate protein folding. GroES binds to the apical surface of the GroEL ring, thereby capping the opening of the GroEL channel. In Erwinia tasmaniensis (strain DSM 17950 / CFBP 7177 / CIP 109463 / NCPPB 4357 / Et1/99), this protein is Co-chaperonin GroES.